Consider the following 188-residue polypeptide: UPF0461 protein C5orf24 (188 aa).

Residues 1 to 10 (MMHPVASSNP) are compositionally biased toward polar residues. Positions 1-20 (MMHPVASSNPAFCGPGKPSC) are disordered. Phosphoserine is present on serine 37. A Glycyl lysine isopeptide (Lys-Gly) (interchain with G-Cter in SUMO2) cross-link involves residue lysine 75. The disordered stretch occupies residues 79-142 (KKKKNLNRSG…GYKVSPGRPP (64 aa)). A compositionally biased stretch (basic residues) spans 80-92 (KKKNLNRSGKRGR). The segment covering 94–107 (SGTTKSAGYRTSTG) has biased composition (polar residues). Residues serine 121 and serine 180 each carry the phosphoserine modification. Residue lysine 184 forms a Glycyl lysine isopeptide (Lys-Gly) (interchain with G-Cter in SUMO2) linkage.

This sequence belongs to the UPF0461 family.

This Homo sapiens (Human) protein is UPF0461 protein C5orf24 (C5orf24).